The sequence spans 517 residues: Nectin-1 (517 aa).

Residues 1-30 (MARMGLAGAAGRWWGLALGLTAFFLPGVHS) form the signal peptide. The 111-residue stretch at 31–141 (QVVQVNDSMY…GNRESQLNLT (111 aa)) folds into the Ig-like V-type domain. At 31–355 (QVVQVNDSMY…GRRAGPVPTA (325 aa)) the chain is on the extracellular side. 3 N-linked (GlcNAc...) asparagine glycosylation sites follow: N36, N72, and N139. C51 and C124 are joined by a disulfide. 2 consecutive Ig-like C2-type domains span residues 149-238 (WIEG…FKES) and 247-334 (PEVT…VNIT). 2 disulfide bridges follow: C172-C226 and C269-C316. N202 carries an N-linked (GlcNAc...) (complex) asparagine glycan. Residues 282-299 (WTTLNGSLPKGVEAQNRT) form an interaction with FGFR region. Residues N286, N297, N307, and N332 are each glycosylated (N-linked (GlcNAc...) asparagine). The helical transmembrane segment at 356 to 376 (IIGGVAGSILLVLIVVGGIVV) threads the bilayer. The Cytoplasmic segment spans residues 377-517 (ALRRRRHTFK…SFISKKEWYV (141 aa)). The interval 399 to 488 (GYSKAGIPQH…DGYGDRTLGY (90 aa)) is disordered. Phosphoserine is present on residues S422, S434, and S435. Y436 bears the Phosphotyrosine mark. Acidic residues predominate over residues 436 to 445 (YEEEEEEEEG). Residues 449–466 (GERKVGGPHPKYDEDAKR) are compositionally biased toward basic and acidic residues. S511 bears the Phosphoserine mark.

The protein belongs to the nectin family. Cis- and trans-homodimer. Can form trans-heterodimers with NECTIN3 and with NECTIN4. Interaction between NECTIN1 and NECTIN3 on the pre- and postsynaptic sites, respectively, initiates the formation of puncta adherentia junctions between axons and dendrites. Interacts (via cytoplasmic domain) with AFDN (via PDZ domain); this interaction recruits NECTIN1 to cadherin-based adherens junctions and provides a connection with the actin cytoskeleton. Interacts with integrin alphaV/beta3. Interacts (via Ig-like C2-type domain 2) with FGFR1, FGFR2 and FGFR3. In terms of assembly, (Microbial infection) Interacts with herpes simplex virus 1/HHV-1, herpes simplex virus 2/HHV-2, and pseudorabies virus/PRV envelope glycoprotein D. Post-translationally, (Microbial infection) Ubiquitinated by CBL following infection by herpes simplex virus 1/HHV-1 and association with HHV-1 envelope glycoprotein D, leading to its removal from cell surface.

The protein resides in the cell membrane. It localises to the cell junction. It is found in the adherens junction. Its subcellular location is the presynaptic cell membrane. The protein localises to the secreted. In terms of biological role, cell adhesion molecule that promotes cell-cell contacts and plays important roles in the development of the nervous system. Acts by forming homophilic or heterophilic trans-dimers. Heterophilic interactions have been detected between NECTIN1 and NECTIN3 and between NECTIN1 and NECTIN4. Involved in axon guidance by promoting contacts between the commissural axons and the floor plate cells. Involved in synaptogegesis. Has some neurite outgrowth-promoting activity. Promotes formation of checkerboard-like cellular pattern of hair cells and supporting cells in the auditory epithelium via heterophilic interaction with NECTIN3: NECTIN1 is present in the membrane of hair cells and associates with NECTIN3 on supporting cells, thereby mediating heterotypic adhesion between these two cell types. Required for enamel mineralization. Functionally, (Microbial infection) Acts as a receptor for herpes simplex virus 1/HHV-1, herpes simplex virus 2/HHV-2, and pseudorabies virus/PRV. Constitutes the major receptor for herpes simplex virus 1/HHV-1 entry into host cells. This Homo sapiens (Human) protein is Nectin-1.